The sequence spans 88 residues: UPF0297 protein SSA_2241 (88 aa).

It belongs to the UPF0297 family.

The polypeptide is UPF0297 protein SSA_2241 (Streptococcus sanguinis (strain SK36)).